A 389-amino-acid polypeptide reads, in one-letter code: Cellobiose 2-epimerase (389 aa).

This sequence belongs to the cellobiose 2-epimerase family.

The catalysed reaction is D-cellobiose = beta-D-glucosyl-(1-&gt;4)-D-mannopyranose. Its function is as follows. Catalyzes the reversible epimerization of cellobiose to 4-O-beta-D-glucopyranosyl-D-mannose (Glc-Man). This is Cellobiose 2-epimerase from Ruminococcus albus (strain ATCC 27210 / DSM 20455 / JCM 14654 / NCDO 2250 / 7).